The chain runs to 96 residues: Co-chaperonin GroES (96 aa).

It belongs to the GroES chaperonin family. In terms of assembly, heptamer of 7 subunits arranged in a ring. Interacts with the chaperonin GroEL.

The protein resides in the cytoplasm. In terms of biological role, together with the chaperonin GroEL, plays an essential role in assisting protein folding. The GroEL-GroES system forms a nano-cage that allows encapsulation of the non-native substrate proteins and provides a physical environment optimized to promote and accelerate protein folding. GroES binds to the apical surface of the GroEL ring, thereby capping the opening of the GroEL channel. The sequence is that of Co-chaperonin GroES from Shewanella amazonensis (strain ATCC BAA-1098 / SB2B).